Reading from the N-terminus, the 235-residue chain is LexA repressor (235 aa).

The segment at residues 47-67 (IREIADAVGLTSTSSVAHQLR) is a DNA-binding region (H-T-H motif). Active-site for autocatalytic cleavage activity residues include Ser-159 and Lys-196.

The protein belongs to the peptidase S24 family. Homodimer.

The catalysed reaction is Hydrolysis of Ala-|-Gly bond in repressor LexA.. Represses a number of genes involved in the response to DNA damage (SOS response), including recA and lexA. In the presence of single-stranded DNA, RecA interacts with LexA causing an autocatalytic cleavage which disrupts the DNA-binding part of LexA, leading to derepression of the SOS regulon and eventually DNA repair. This Mycobacterium leprae (strain Br4923) protein is LexA repressor.